A 368-amino-acid polypeptide reads, in one-letter code: Alanine racemase (368 aa).

The active-site Proton acceptor; specific for D-alanine is the Lys40. At Lys40 the chain carries N6-(pyridoxal phosphate)lysine. Substrate is bound at residue Arg136. Tyr263 (proton acceptor; specific for L-alanine) is an active-site residue. Met310 is a substrate binding site.

The protein belongs to the alanine racemase family. Pyridoxal 5'-phosphate is required as a cofactor.

It carries out the reaction L-alanine = D-alanine. It functions in the pathway amino-acid biosynthesis; D-alanine biosynthesis; D-alanine from L-alanine: step 1/1. Functionally, catalyzes the interconversion of L-alanine and D-alanine. May also act on other amino acids. This is Alanine racemase (alr) from Streptococcus gordonii (strain Challis / ATCC 35105 / BCRC 15272 / CH1 / DL1 / V288).